A 478-amino-acid polypeptide reads, in one-letter code: Proline--tRNA ligase (478 aa).

It belongs to the class-II aminoacyl-tRNA synthetase family. ProS type 3 subfamily. As to quaternary structure, homodimer.

The protein resides in the cytoplasm. It catalyses the reaction tRNA(Pro) + L-proline + ATP = L-prolyl-tRNA(Pro) + AMP + diphosphate. In terms of biological role, catalyzes the attachment of proline to tRNA(Pro) in a two-step reaction: proline is first activated by ATP to form Pro-AMP and then transferred to the acceptor end of tRNA(Pro). The chain is Proline--tRNA ligase from Clostridium botulinum (strain 657 / Type Ba4).